Here is a 264-residue protein sequence, read N- to C-terminus: Apolipoprotein A-I (264 aa).

An N-terminal signal peptide occupies residues 1 to 18 (MKAVVLTVAVLFLTGSQA). Tandem repeats lie at residues 67 to 88 (LKLLDNWDSLSSTVSKVREQIG) and 89 to 110 (PVSQDFWDKLEKDTVSLRQEMN). Residues 67 to 264 (LKLLDNWDSL…DEATKKLNTQ (198 aa)) are 10 X approximate tandem repeats. Methionine sulfoxide is present on methionine 109. The 3; half-length repeat unit spans residues 111 to 121 (KDLEEVKRKVQ). A run of 3 repeats spans residues 122 to 143 (PYLDEFQKRWQEDVERYRQQVE), 144 to 165 (PLSKELREGARQKLLELHEKLS), and 166 to 187 (PLGQEMRDRARTHVDALRTHLA). The 7; truncated repeat unit spans residues 188–207 (PYSDELRQRLAARLEALKEG). Repeat unit 8 spans residues 208–229 (SSFAEYQAKATEHLSALGEKAK). The stretch at 230-240 (PALEDLRQGLL) is one 9; half-length repeat. Repeat 10 spans residues 241–264 (PVLESLKLSFWSAVDEATKKLNTQ).

Belongs to the apolipoprotein A1/A4/E family. As to quaternary structure, homodimer. Interacts with APOA1BP and CLU. Component of a sperm activating protein complex (SPAP), consisting of APOA1, an immunoglobulin heavy chain, an immunoglobulin light chain and albumin. Interacts with NDRG1. Interacts with SCGB3A2. Interacts with NAXE and YJEFN3. Post-translationally, glycosylated. Palmitoylated. In terms of processing, phosphorylation sites are present in the extracellular medium.

The protein resides in the secreted. Its function is as follows. Participates in the reverse transport of cholesterol from tissues to the liver for excretion by promoting cholesterol efflux from tissues and by acting as a cofactor for the lecithin cholesterol acyltransferase (LCAT). As part of the SPAP complex, activates spermatozoa motility. The sequence is that of Apolipoprotein A-I (APOA1) from Ictidomys tridecemlineatus (Thirteen-lined ground squirrel).